We begin with the raw amino-acid sequence, 407 residues long: tRNA (guanine(26)-N(2))-dimethyltransferase (407 aa).

A Trm1 methyltransferase domain is found at 10-400 (AVTHEGRSII…APWGEVLEAV (391 aa)). 4 residues coordinate S-adenosyl-L-methionine: Arg-50, Arg-82, Asp-99, and Glu-128.

Belongs to the class I-like SAM-binding methyltransferase superfamily. Trm1 family.

The catalysed reaction is guanosine(26) in tRNA + 2 S-adenosyl-L-methionine = N(2)-dimethylguanosine(26) in tRNA + 2 S-adenosyl-L-homocysteine + 2 H(+). Its function is as follows. Dimethylates a single guanine residue at position 26 of a number of tRNAs using S-adenosyl-L-methionine as donor of the methyl groups. The polypeptide is tRNA (guanine(26)-N(2))-dimethyltransferase (Aeropyrum pernix (strain ATCC 700893 / DSM 11879 / JCM 9820 / NBRC 100138 / K1)).